Consider the following 164-residue polypeptide: Ribosome maturation factor RimM (164 aa).

A PRC barrel domain is found at 90–161 (KGSYFIADLI…TVTIKPLEIW (72 aa)).

This sequence belongs to the RimM family. As to quaternary structure, binds ribosomal protein uS19.

Its subcellular location is the cytoplasm. Functionally, an accessory protein needed during the final step in the assembly of 30S ribosomal subunit, possibly for assembly of the head region. Essential for efficient processing of 16S rRNA. May be needed both before and after RbfA during the maturation of 16S rRNA. It has affinity for free ribosomal 30S subunits but not for 70S ribosomes. The protein is Ribosome maturation factor RimM of Clostridium botulinum (strain ATCC 19397 / Type A).